The following is a 98-amino-acid chain: ORF9b protein (98 aa).

The region spanning 9–98 (VPPALHLVDP…PDEFVVVTAK (90 aa)) is the 9b domain. Positions 46–54 (ILRLGSQLS) match the Nuclear export signal motif.

It belongs to the coronavirus group 2 protein 9b family. Homodimer. Interacts with host XPO1; this interaction mediates protein ORF9b export out of the nucleus. Interacts with host MAVS. Interacts with protein ORF6.

Its subcellular location is the virion. It localises to the host cytoplasmic vesicle membrane. The protein resides in the host cytoplasm. The protein localises to the host endoplasmic reticulum. It is found in the host nucleus. Its subcellular location is the host mitochondrion. In terms of biological role, plays a role in the inhibition of host innate immune response by targeting the mitochondrial-associated adapter MAVS. Mechanistically, usurps the E3 ligase ITCH to trigger the degradation of MAVS, TRAF3, and TRAF6. In addition, causes mitochondrial elongation by triggering ubiquitination and proteasomal degradation of dynamin-like protein 1/DNM1L. The polypeptide is ORF9b protein (Homo sapiens (Human)).